A 349-amino-acid chain; its full sequence is Ribosomal RNA small subunit methyltransferase C (349 aa).

This sequence belongs to the methyltransferase superfamily. RsmC family. As to quaternary structure, monomer.

It is found in the cytoplasm. The enzyme catalyses guanosine(1207) in 16S rRNA + S-adenosyl-L-methionine = N(2)-methylguanosine(1207) in 16S rRNA + S-adenosyl-L-homocysteine + H(+). Its function is as follows. Specifically methylates the guanine in position 1207 of 16S rRNA in the 30S particle. The protein is Ribosomal RNA small subunit methyltransferase C of Psychromonas ingrahamii (strain DSM 17664 / CCUG 51855 / 37).